The following is a 1777-amino-acid chain: Non-reducing polyketide synthase nscA (1777 aa).

An N-terminal acylcarrier protein transacylase domain (SAT) region spans residues 27-261 (DLFRRLDQHS…PLPVYDGLCH (235 aa)). One can recognise a Ketosynthase family 3 (KS3) domain in the interval 396–829 (SSKLAIVGMA…GGNTTLLLED (434 aa)). Active-site for beta-ketoacyl synthase activity residues include cysteine 569, histidine 704, and histidine 747. Residues 934 to 1212 (AFTGQGAYYH…SAIPSCRRNE (279 aa)) form a malonyl-CoA:ACP transacylase (MAT) domain region. Residues 1297–1616 (TSLVHQITAE…RLLMDRFFSP (320 aa)) are product template (PT) domain. The N-terminal hotdog fold stretch occupies residues 1301-1437 (HQITAETVEA…ATIRFEDPEA (137 aa)). Residues 1301–1611 (HQITAETVEA…FRRVPRLLMD (311 aa)) form the PKS/mFAS DH domain. Histidine 1333 (proton acceptor; for dehydratase activity) is an active-site residue. The interval 1465 to 1611 (ASRLSKPLAY…FRRVPRLLMD (147 aa)) is C-terminal hotdog fold. Catalysis depends on aspartate 1522, which acts as the Proton donor; for dehydratase activity. Positions 1674 to 1704 (LLATSSKSSTPKESPIVTPAESERAEPVDNS) are disordered. The span at 1677-1688 (TSSKSSTPKESP) shows a compositional bias: low complexity. In terms of domain architecture, Carrier spans 1700–1777 (PVDNSMTSQC…EMTAWIEEYC (78 aa)). The residue at position 1737 (serine 1737) is an O-(pantetheine 4'-phosphoryl)serine.

Requires pantetheine 4'-phosphate as cofactor.

It functions in the pathway secondary metabolite biosynthesis. Its function is as follows. Non-reducing polyketide synthase; part of the gene cluster that mediates the biosynthesis of neosartoricin B, a prenylated anthracenone that probably exhibits T-cell antiproliferative activity, suggestive of a physiological role as an immunosuppressive agent. The non-reducing polyketide synthase nscA probably synthesizes and cyclizes the decaketide backbone. The hydrolase nscB then mediates the product release through hydrolysis followed by spontaneous decarboxylation. The prenyltransferase nscD catalyzes the addition of the dimethylallyl group to the aromatic C5. The FAD-dependent monooxygenase nscC is then responsible for the stereospecific hydroxylation at C2. Neosartoricin B can be converted into two additional compounds neosartoricins C and D. Neosartoricin C is a spirocyclic compound that is cyclized through the attack of C3 hydroxyl on C14, followed by dehydration. On the other hand, neosartoricin D is a further cyclized compound in which attack of C2 on C14 in neosartoricin C results in the formation of the acetal-containing dioxabicyclo-octanone ring. Both of these compounds are novel and possibly represent related metabolites of the gene cluster. The sequence is that of Non-reducing polyketide synthase nscA from Trichophyton equinum (strain ATCC MYA-4606 / CBS 127.97) (Horse ringworm fungus).